Here is a 274-residue protein sequence, read N- to C-terminus: 4-diphosphocytidyl-2-C-methyl-D-erythritol kinase (274 aa).

K7 is a catalytic residue. 90-100 serves as a coordination point for ATP; sequence PMGGGLGGGSS. Residue D132 is part of the active site.

This sequence belongs to the GHMP kinase family. IspE subfamily.

The catalysed reaction is 4-CDP-2-C-methyl-D-erythritol + ATP = 4-CDP-2-C-methyl-D-erythritol 2-phosphate + ADP + H(+). Its pathway is isoprenoid biosynthesis; isopentenyl diphosphate biosynthesis via DXP pathway; isopentenyl diphosphate from 1-deoxy-D-xylulose 5-phosphate: step 3/6. Its function is as follows. Catalyzes the phosphorylation of the position 2 hydroxy group of 4-diphosphocytidyl-2C-methyl-D-erythritol. This chain is 4-diphosphocytidyl-2-C-methyl-D-erythritol kinase, found in Dechloromonas aromatica (strain RCB).